The sequence spans 465 residues: Chromosomal replication initiator protein DnaA (465 aa).

Residues 1 to 87 (MLWTDCLTRL…RPGSILSSSE (87 aa)) are domain I, interacts with DnaA modulators. Residues 81–123 (SILSSSEQPATTTAALQTAPIPQPAKGKREPEPVANTAVSSKS) form a disordered region. A compositionally biased stretch (low complexity) spans 88-100 (QPATTTAALQTAP). Residues 88-127 (QPATTTAALQTAPIPQPAKGKREPEPVANTAVSSKSSKKK) are domain II. The tract at residues 128–345 (LLNPQFTFSL…GALNKVVAIS (218 aa)) is domain III, AAA+ region. Residues G173, G175, K176, and T177 each coordinate ATP. The domain IV, binds dsDNA stretch occupies residues 346–465 (RFKGAPIDLD…YKNLLRLLQS (120 aa)).

It belongs to the DnaA family. In terms of assembly, oligomerizes as a right-handed, spiral filament on DNA at oriC.

It is found in the cytoplasm. Plays an essential role in the initiation and regulation of chromosomal replication. ATP-DnaA binds to the origin of replication (oriC) to initiate formation of the DNA replication initiation complex once per cell cycle. Binds the DnaA box (a 9 base pair repeat at the origin) and separates the double-stranded (ds)DNA. Forms a right-handed helical filament on oriC DNA; dsDNA binds to the exterior of the filament while single-stranded (ss)DNA is stabiized in the filament's interior. The ATP-DnaA-oriC complex binds and stabilizes one strand of the AT-rich DNA unwinding element (DUE), permitting loading of DNA polymerase. After initiation quickly degrades to an ADP-DnaA complex that is not apt for DNA replication. Binds acidic phospholipids. In Acinetobacter baumannii (strain SDF), this protein is Chromosomal replication initiator protein DnaA.